A 1004-amino-acid chain; its full sequence is 2-oxoglutarate dehydrogenase E1 component (1004 aa).

This sequence belongs to the alpha-ketoglutarate dehydrogenase family. Homodimer. Part of the 2-oxoglutarate dehydrogenase (OGDH) complex composed of E1 (2-oxoglutarate dehydrogenase), E2 (dihydrolipoamide succinyltransferase) and E3 (dihydrolipoamide dehydrogenase); the complex contains multiple copies of the three enzymatic components (E1, E2 and E3). Thiamine diphosphate is required as a cofactor.

It carries out the reaction N(6)-[(R)-lipoyl]-L-lysyl-[protein] + 2-oxoglutarate + H(+) = N(6)-[(R)-S(8)-succinyldihydrolipoyl]-L-lysyl-[protein] + CO2. Its function is as follows. E1 component of the 2-oxoglutarate dehydrogenase (OGDH) complex which catalyzes the decarboxylation of 2-oxoglutarate, the first step in the conversion of 2-oxoglutarate to succinyl-CoA and CO(2). The sequence is that of 2-oxoglutarate dehydrogenase E1 component from Brucella ovis (strain ATCC 25840 / 63/290 / NCTC 10512).